Consider the following 331-residue polypeptide: NADH-quinone oxidoreductase subunit H 2 (331 aa).

Transmembrane regions (helical) follow at residues 6 to 26, 79 to 99, 120 to 140, 155 to 175, 193 to 213, 242 to 262, 271 to 291, and 310 to 330; these read AGFLVLIAKLTIVLAVLLLVA, IFMLAPAVVAATALLVFAVIP, VGLLYFFALSSLGVYGVALGG, GAAQMISYELSLGLAIVPVVM, PFILTQPVAFAIFVISAMAEI, LFFLGEYVNMQVLGGLVAVLF, LPPVVWLFIKIVLVALIMIWV, and VLIPLALVNIMVTGAWVLWMG.

Belongs to the complex I subunit 1 family. As to quaternary structure, NDH-1 is composed of 14 different subunits. Subunits NuoA, H, J, K, L, M, N constitute the membrane sector of the complex.

Its subcellular location is the cell inner membrane. The catalysed reaction is a quinone + NADH + 5 H(+)(in) = a quinol + NAD(+) + 4 H(+)(out). Its function is as follows. NDH-1 shuttles electrons from NADH, via FMN and iron-sulfur (Fe-S) centers, to quinones in the respiratory chain. The immediate electron acceptor for the enzyme in this species is believed to be ubiquinone. Couples the redox reaction to proton translocation (for every two electrons transferred, four hydrogen ions are translocated across the cytoplasmic membrane), and thus conserves the redox energy in a proton gradient. This subunit may bind ubiquinone. The protein is NADH-quinone oxidoreductase subunit H 2 of Syntrophobacter fumaroxidans (strain DSM 10017 / MPOB).